The chain runs to 295 residues: Probable aspartoacylase (295 aa).

2 residues coordinate Zn(2+): His13 and Glu16. Residues Arg54 and 61-62 (NR) contribute to the substrate site. Residue His100 participates in Zn(2+) binding. Substrate contacts are provided by Glu158 and Tyr268.

Belongs to the AspA/AstE family. Aspartoacylase subfamily. The cofactor is Zn(2+).

It catalyses the reaction an N-acyl-L-aspartate + H2O = a carboxylate + L-aspartate. The protein is Probable aspartoacylase of Prochlorococcus marinus subsp. pastoris (strain CCMP1986 / NIES-2087 / MED4).